The sequence spans 242 residues: Pyr4-family terpene cyclase mfmH (242 aa).

4 helical membrane-spanning segments follow: residues 25–45 (VQDG…ILYI), 55–75 (GMPL…GAAI), 80–100 (AQVV…YTTW), and 116–136 (NLGW…WAFL). The N-linked (GlcNAc...) asparagine glycan is linked to Asn170. Helical transmembrane passes span 175-195 (SWGI…IFVW) and 211-231 (VTIF…FVYA).

This sequence belongs to the paxB family.

It localises to the membrane. Its pathway is secondary metabolite biosynthesis; terpenoid biosynthesis. Functionally, terpene cyclase; part of the gene cluster that mediates the biosynthesis of the phthalide-terpenoid hybrid 11'-O-desmethylfendlerol. Within the pathway, mfmH catalyzes the last step and cyclizes the prenyl unit of 5-O-farnesylcyclopolic acid into a drimane-like structure to yield 11'-O-desmethylfendlerol. The biosynthesis of 11'-O-desmethylfendlerol begins with the NR-PKS mfmB that forms 3,5-dimethylorsellinic acid (DMOA), which is then transformed into the phthalide 5,7-dihydroxy-4-(hydroxymethyl)-6-methylphthalide by the cytochrome P450 monooxygenase mfmA and the hydrolase mfmC. Subsequently, the methyltransferase mfmE catalyzes 7-O-methylation to yield 5-hydroxy-4-(hydroxymethyl)-7-methoxy-6-methylphthalide, which undergoes C-3 hydroxylation by the cytochrome P450 monooxygenase mfmF. The resultant cyclopolic acid (2,5-dihydroxy-4-(hydroxymethyl)-7-methoxy-6-methylphthalide) is then farnesylated by the DMATS-type prenyltransferase mfmD to afford 5-O-farnesylcyclopolic acid. Finally, the Pyr4-family terpene cyclase mfmH cyclizes the farnesyl moiety of 5-O-farnesylcyclopolic acid into a drimane-like structure, thus completing the biosynthesis of 11'-O-desmethylfendlerol. The chain is Pyr4-family terpene cyclase mfmH from Annulohypoxylon moriforme (Filamentous fungus).